Consider the following 252-residue polypeptide: Imidazole glycerol phosphate synthase subunit HisF (252 aa).

Active-site residues include Asp-11 and Asp-130.

The protein belongs to the HisA/HisF family. Heterodimer of HisH and HisF.

The protein resides in the cytoplasm. It carries out the reaction 5-[(5-phospho-1-deoxy-D-ribulos-1-ylimino)methylamino]-1-(5-phospho-beta-D-ribosyl)imidazole-4-carboxamide + L-glutamine = D-erythro-1-(imidazol-4-yl)glycerol 3-phosphate + 5-amino-1-(5-phospho-beta-D-ribosyl)imidazole-4-carboxamide + L-glutamate + H(+). It participates in amino-acid biosynthesis; L-histidine biosynthesis; L-histidine from 5-phospho-alpha-D-ribose 1-diphosphate: step 5/9. Functionally, IGPS catalyzes the conversion of PRFAR and glutamine to IGP, AICAR and glutamate. The HisF subunit catalyzes the cyclization activity that produces IGP and AICAR from PRFAR using the ammonia provided by the HisH subunit. The chain is Imidazole glycerol phosphate synthase subunit HisF from Dictyoglomus turgidum (strain DSM 6724 / Z-1310).